The sequence spans 846 residues: Aminopeptidase N (846 aa).

Residues Glu120 and 252 to 256 each bind substrate; that span reads GAMEN. A Zn(2+)-binding site is contributed by His288. The Proton acceptor role is filled by Glu289. Zn(2+)-binding residues include His292 and Glu311.

Belongs to the peptidase M1 family. As to quaternary structure, monomer. Zn(2+) serves as cofactor.

Its subcellular location is the cytoplasm. The enzyme catalyses Release of an N-terminal amino acid, Xaa-|-Yaa- from a peptide, amide or arylamide. Xaa is preferably Ala, but may be most amino acids including Pro (slow action). When a terminal hydrophobic residue is followed by a prolyl residue, the two may be released as an intact Xaa-Pro dipeptide.. Aminopeptidase with broad substrate specificity to several peptides. It has more affinity for oligopeptides than for dipeptides. It plays an essential role in the metabolism, it may be involved in nitrogen supply or protein turnover. This is Aminopeptidase N (pepN) from Lactococcus lactis subsp. cremoris (Streptococcus cremoris).